A 533-amino-acid chain; its full sequence is 2,3-bisphosphoglycerate-independent phosphoglycerate mutase (533 aa).

Mn(2+) contacts are provided by D15 and S65. The Phosphoserine intermediate role is filled by S65. Residues H126, 156-157 (RD), R188, R194, 258-261 (RPDR), and K331 each bind substrate. D398, H402, D439, H440, and H457 together coordinate Mn(2+).

The protein belongs to the BPG-independent phosphoglycerate mutase family. In terms of assembly, monomer. The cofactor is Mn(2+).

It carries out the reaction (2R)-2-phosphoglycerate = (2R)-3-phosphoglycerate. Its pathway is carbohydrate degradation; glycolysis; pyruvate from D-glyceraldehyde 3-phosphate: step 3/5. Functionally, catalyzes the interconversion of 2-phosphoglycerate and 3-phosphoglycerate. This Trichormus variabilis (strain ATCC 29413 / PCC 7937) (Anabaena variabilis) protein is 2,3-bisphosphoglycerate-independent phosphoglycerate mutase.